We begin with the raw amino-acid sequence, 37 residues long: Large ribosomal subunit protein bL36B (37 aa).

Belongs to the bacterial ribosomal protein bL36 family.

The polypeptide is Large ribosomal subunit protein bL36B (Saccharopolyspora erythraea (strain ATCC 11635 / DSM 40517 / JCM 4748 / NBRC 13426 / NCIMB 8594 / NRRL 2338)).